The sequence spans 96 residues: Prokineticin Bm8-f (96 aa).

The first 19 residues, 1–19 (MKCFAQIVVLLLVIAFSHG), serve as a signal peptide directing secretion. 5 disulfides stabilise this stretch: C26-C38, C32-C50, C37-C78, C60-C86, and C80-C95.

The protein belongs to the AVIT (prokineticin) family. As to expression, expressed by the skin glands.

It localises to the secreted. In terms of biological role, potent agonist for both PKR1/PROKR1 and PKR2/PROKR2, and inducer of a potent and long-lasting hyperalgesia. Also potentiates capsaicin-induced TRPV1 current, when tested on DRG neurons. At subnanomolar concentrations, this protein both induces potent chemotaxis of macrophages and stimulates LPS-induced production of the pro-inflammatory cytokines IL-1 and IL-12. In vivo, potently stimulates the contraction of the guinea-pig gastrointestinal (GI) smooth muscle (nanomolar concentration). This Bombina maxima (Giant fire-bellied toad) protein is Prokineticin Bm8-f.